We begin with the raw amino-acid sequence, 580 residues long: Arginine--tRNA ligase (580 aa).

The 'HIGH' region motif lies at Ala131–His141.

It belongs to the class-I aminoacyl-tRNA synthetase family. As to quaternary structure, monomer.

It localises to the cytoplasm. It catalyses the reaction tRNA(Arg) + L-arginine + ATP = L-arginyl-tRNA(Arg) + AMP + diphosphate. The protein is Arginine--tRNA ligase of Cereibacter sphaeroides (strain ATCC 17023 / DSM 158 / JCM 6121 / CCUG 31486 / LMG 2827 / NBRC 12203 / NCIMB 8253 / ATH 2.4.1.) (Rhodobacter sphaeroides).